Reading from the N-terminus, the 151-residue chain is MFRRPVLQVFRQFVRQESEVASSLVLERSLNRVQLLGRVGQDPVMRQVEGKNPVTIFSLATNEMWRSGDNEAYQMGDVSQKTTWHRISVFRPGLRDVAYQYVKKGARIFVEGKVDYGEYMDKNNVRRQATTIIADNIIFLSDQAREKPLNG.

A mitochondrion-targeting transit peptide spans 1–16 (MFRRPVLQVFRQFVRQ). The SSB domain maps to 30-141 (LNRVQLLGRV…IIADNIIFLS (112 aa)). Residues serine 67 and serine 79 each carry the phosphoserine modification. Lysine 113 carries the N6-acetyllysine modification. Position 122 is an N6-succinyllysine (lysine 122).

In terms of assembly, homotetramer. Interacts with MPG/AAG, through inhibition of its glycosylase activity it potentially prevents formation of DNA breaks in ssDNA, ensuring that base removal primarily occurs in dsDNA. Interacts with POLDIP2. Interacts with PRIMPOL.

The protein localises to the mitochondrion. Its subcellular location is the mitochondrion matrix. It localises to the mitochondrion nucleoid. Functionally, binds preferentially and cooperatively to pyrimidine rich single-stranded DNA (ss-DNA). In vitro, required to maintain the copy number of mitochondrial DNA (mtDNA) and plays a crucial role during mtDNA replication by stimulating the activity of the replisome components POLG and TWNK at the replication fork. Promotes the activity of the gamma complex polymerase POLG, largely by organizing the template DNA and eliminating secondary structures to favor ss-DNA conformations that facilitate POLG activity. In addition it is able to promote the 5'-3' unwinding activity of the mtDNA helicase TWNK. May also function in mtDNA repair. The protein is Single-stranded DNA-binding protein, mitochondrial (Ssbp1) of Rattus norvegicus (Rat).